A 236-amino-acid chain; its full sequence is Nopaline transport system permease protein NocQ (236 aa).

The 202-residue stretch at 21–222 (AMMTVVVAAC…LLSSVSNRGF (202 aa)) folds into the ABC transmembrane type-1 domain. 4 helical membrane passes run 25 to 45 (VVVAACSYFFGIIFGSLFAAA), 63 to 83 (VVRGVPELLIIFLVFFGGGTL), 102 to 122 (IFVIGVLCISVSAGAYATEVI), and 199 to 219 (QPFTFYITAFVIFLLLSSVSN).

The protein belongs to the binding-protein-dependent transport system permease family. HisMQ subfamily.

Its subcellular location is the cell inner membrane. Its function is as follows. Component of the nopaline active transport system probably consisting of four subunits: Q, M, P and T. This system is also capable of transporting octopine provided that catabolic functions are induced with nopaline. This is Nopaline transport system permease protein NocQ (nocQ) from Agrobacterium fabrum (strain C58 / ATCC 33970) (Agrobacterium tumefaciens (strain C58)).